Reading from the N-terminus, the 752-residue chain is Translation initiation factor IF-2 (752 aa).

The segment covering 148–159 (KKVKDKNKKEEP) has biased composition (basic and acidic residues). The segment at 148–170 (KKVKDKNKKEEPAVTPSTAPRKK) is disordered. The 170-residue stretch at 250 to 419 (PRPPIVTVMG…ALQAEIMELK (170 aa)) folds into the tr-type G domain. A G1 region spans residues 259–266 (GHVDHGKT). 259 to 266 (GHVDHGKT) is a GTP binding site. A G2 region spans residues 284 to 288 (GITQH). Positions 305 to 308 (DTPG) are G3. Residues 305–309 (DTPGH) and 359–362 (NKID) each bind GTP. The interval 359–362 (NKID) is G4. The segment at 395–397 (SAK) is G5.

The protein belongs to the TRAFAC class translation factor GTPase superfamily. Classic translation factor GTPase family. IF-2 subfamily.

The protein localises to the cytoplasm. One of the essential components for the initiation of protein synthesis. Protects formylmethionyl-tRNA from spontaneous hydrolysis and promotes its binding to the 30S ribosomal subunits. Also involved in the hydrolysis of GTP during the formation of the 70S ribosomal complex. This Thermodesulfovibrio yellowstonii (strain ATCC 51303 / DSM 11347 / YP87) protein is Translation initiation factor IF-2.